Consider the following 448-residue polypeptide: Serine--tRNA ligase (448 aa).

246 to 248 contacts L-serine; the sequence is TAE. ATP contacts are provided by residues 277–279 and Val-293; that span reads RKE. Glu-300 lines the L-serine pocket. ATP is bound at residue 364–367; the sequence is ELAS. Position 399 (Thr-399) interacts with L-serine.

This sequence belongs to the class-II aminoacyl-tRNA synthetase family. Type-1 seryl-tRNA synthetase subfamily. As to quaternary structure, homodimer. The tRNA molecule binds across the dimer.

It is found in the cytoplasm. The enzyme catalyses tRNA(Ser) + L-serine + ATP = L-seryl-tRNA(Ser) + AMP + diphosphate + H(+). It catalyses the reaction tRNA(Sec) + L-serine + ATP = L-seryl-tRNA(Sec) + AMP + diphosphate + H(+). Its pathway is aminoacyl-tRNA biosynthesis; selenocysteinyl-tRNA(Sec) biosynthesis; L-seryl-tRNA(Sec) from L-serine and tRNA(Sec): step 1/1. In terms of biological role, catalyzes the attachment of serine to tRNA(Ser). Is also able to aminoacylate tRNA(Sec) with serine, to form the misacylated tRNA L-seryl-tRNA(Sec), which will be further converted into selenocysteinyl-tRNA(Sec). The chain is Serine--tRNA ligase from Pyrobaculum islandicum (strain DSM 4184 / JCM 9189 / GEO3).